Here is a 1255-residue protein sequence, read N- to C-terminus: DNA-directed RNA polymerase subunit beta' (1255 aa).

Positions 68, 70, 83, and 86 each coordinate Zn(2+). Residues D457, D459, and D461 each coordinate Mg(2+). 4 residues coordinate Zn(2+): C803, C885, C892, and C895. A compositionally biased stretch (acidic residues) spans N1220–L1240. The disordered stretch occupies residues N1220–E1255. Residues D1246–E1255 are compositionally biased toward basic and acidic residues.

The protein belongs to the RNA polymerase beta' chain family. The RNAP catalytic core consists of 2 alpha, 1 beta, 1 beta' and 1 omega subunit. When a sigma factor is associated with the core the holoenzyme is formed, which can initiate transcription. Mg(2+) serves as cofactor. It depends on Zn(2+) as a cofactor.

It catalyses the reaction RNA(n) + a ribonucleoside 5'-triphosphate = RNA(n+1) + diphosphate. In terms of biological role, DNA-dependent RNA polymerase catalyzes the transcription of DNA into RNA using the four ribonucleoside triphosphates as substrates. This is DNA-directed RNA polymerase subunit beta' from Lachnoclostridium phytofermentans (strain ATCC 700394 / DSM 18823 / ISDg) (Clostridium phytofermentans).